A 561-amino-acid polypeptide reads, in one-letter code: Putative cuticle collagen 145 (561 aa).

The signal sequence occupies residues 1 to 30; that stretch reads MEKILVTLSTGAASIAVLAVLFTIPSLYNT. Over residues 100 to 112 the composition is skewed to pro residues; sequence TCPPGPPGPPGQP. Disordered stretches follow at residues 100-134, 148-271, 367-398, and 422-540; these read TCPP…TYAP, PQGP…PGGP, TCPP…NTAT, and TGPA…GPGL. Triple-helical region regions lie at residues 102–127 and 153–276; these read PPGP…KGED and GPEG…LPGN. Low complexity-rich tracts occupy residues 164–209 and 219–265; these read AGPD…PGQD and APGA…DGQP. Residues 367 to 379 show a composition bias toward pro residues; sequence TCPPGPPGPPGQP. A triple-helical region region spans residues 413-544; that stretch reads KCPQGPAGPT…PGGPGLPGND (132 aa). Low complexity-rich tracts occupy residues 422–467 and 486–532; these read TGPA…PGQD and APGA…DGQP. Residues 485 to 543 enclose the Collagen-like domain; the sequence is GAPGAPGNAGPAGPAGQDGFPGQDGQPGPAGPAGQDGFPGNAGSDGQPGAPGGPGLPGN.

The protein belongs to the cuticular collagen family. In terms of assembly, collagen polypeptide chains are complexed within the cuticle by disulfide bonds and other types of covalent cross-links.

Its function is as follows. Nematode cuticles are composed largely of collagen-like proteins. The cuticle functions both as an exoskeleton and as a barrier to protect the worm from its environment. In Caenorhabditis briggsae, this protein is Putative cuticle collagen 145.